The sequence spans 204 residues: Small ribosomal subunit protein uS7 (204 aa).

It belongs to the universal ribosomal protein uS7 family. Part of the 30S ribosomal subunit.

In terms of biological role, one of the primary rRNA binding proteins, it binds directly to 16S rRNA where it nucleates assembly of the head domain of the 30S subunit. Is located at the subunit interface close to the decoding center. The polypeptide is Small ribosomal subunit protein uS7 (Methanoregula boonei (strain DSM 21154 / JCM 14090 / 6A8)).